Here is a 350-residue protein sequence, read N- to C-terminus: Small ribosomal subunit biogenesis GTPase RsgA (350 aa).

Positions 1-17 (MSKNKLSKGQQRRVNAN) are enriched in polar residues. The interval 1 to 33 (MSKNKLSKGQQRRVNANHQRRLKTSKEKPDYDD) is disordered. In terms of domain architecture, CP-type G spans 104 to 273 (TSVLTRPDFY…VIDSPGVREF (170 aa)). GTP contacts are provided by residues 160 to 163 (NKID) and 214 to 222 (GQSGVGKSS). Zn(2+) contacts are provided by C297, C302, H304, and C310.

The protein belongs to the TRAFAC class YlqF/YawG GTPase family. RsgA subfamily. Monomer. Associates with 30S ribosomal subunit, binds 16S rRNA. It depends on Zn(2+) as a cofactor.

The protein localises to the cytoplasm. One of several proteins that assist in the late maturation steps of the functional core of the 30S ribosomal subunit. Helps release RbfA from mature subunits. May play a role in the assembly of ribosomal proteins into the subunit. Circularly permuted GTPase that catalyzes slow GTP hydrolysis, GTPase activity is stimulated by the 30S ribosomal subunit. The chain is Small ribosomal subunit biogenesis GTPase RsgA from Escherichia coli (strain SMS-3-5 / SECEC).